The primary structure comprises 260 residues: Small ribosomal subunit protein eS1 (260 aa).

K30 carries the post-translational modification N6-acetyllysine; alternate. Residue K30 forms a Glycyl lysine isopeptide (Lys-Gly) (interchain with G-Cter in SUMO2); alternate linkage. Position 52 is an N6-acetyllysine (K52). Y151 carries the ADP-ribosyltyrosine modification. Residues 228–260 (HGEGSSSGKATGDETGAKVERADGYEPPVQESV) form a disordered region. S232 and S233 each carry phosphoserine. Residues 238–251 (TGDETGAKVERADG) show a composition bias toward basic and acidic residues. K245 carries the N6-acetyllysine; alternate modification. K245 participates in a covalent cross-link: Glycyl lysine isopeptide (Lys-Gly) (interchain with G-Cter in SUMO2); alternate. Y252 carries the post-translational modification Phosphotyrosine. S259 bears the Phosphoserine mark.

The protein belongs to the eukaryotic ribosomal protein eS1 family. In terms of assembly, component of the small ribosomal subunit. Mature ribosomes consist of a small (40S) and a large (60S) subunit. The 40S subunit contains about 33 different proteins and 1 molecule of RNA (18S). The 60S subunit contains about 49 different proteins and 3 molecules of RNA (28S, 5.8S and 5S). Identified in a IGF2BP1-dependent mRNP granule complex containing untranslated mRNAs. Binds with high affinity to IPO4. Interacts with DDIT3. Part of the small subunit (SSU) processome, composed of more than 70 proteins and the RNA chaperone small nucleolar RNA (snoRNA) U3. ADP-ribosylated at Tyr-151 by PARP1 in presence of HPF1.

It is found in the cytoplasm. It localises to the nucleus. Its subcellular location is the nucleolus. In terms of biological role, component of the small ribosomal subunit. The ribosome is a large ribonucleoprotein complex responsible for the synthesis of proteins in the cell. Part of the small subunit (SSU) processome, first precursor of the small eukaryotic ribosomal subunit. During the assembly of the SSU processome in the nucleolus, many ribosome biogenesis factors, an RNA chaperone and ribosomal proteins associate with the nascent pre-rRNA and work in concert to generate RNA folding, modifications, rearrangements and cleavage as well as targeted degradation of pre-ribosomal RNA by the RNA exosome. May play a role during erythropoiesis through regulation of transcription factor DDIT3. In Felis catus (Cat), this protein is Small ribosomal subunit protein eS1.